The sequence spans 426 residues: 3-phosphoshikimate 1-carboxyvinyltransferase (426 aa).

Positions 20, 21, and 25 each coordinate 3-phosphoshikimate. Lys20 serves as a coordination point for phosphoenolpyruvate. Phosphoenolpyruvate-binding residues include Gly92 and Arg120. 3-phosphoshikimate-binding residues include Ser166, Gln168, Asp312, and Lys339. Position 168 (Gln168) interacts with phosphoenolpyruvate. Catalysis depends on Asp312, which acts as the Proton acceptor. Residue Arg385 coordinates phosphoenolpyruvate.

The protein belongs to the EPSP synthase family. Monomer.

It localises to the cytoplasm. It catalyses the reaction 3-phosphoshikimate + phosphoenolpyruvate = 5-O-(1-carboxyvinyl)-3-phosphoshikimate + phosphate. It participates in metabolic intermediate biosynthesis; chorismate biosynthesis; chorismate from D-erythrose 4-phosphate and phosphoenolpyruvate: step 6/7. Its function is as follows. Catalyzes the transfer of the enolpyruvyl moiety of phosphoenolpyruvate (PEP) to the 5-hydroxyl of shikimate-3-phosphate (S3P) to produce enolpyruvyl shikimate-3-phosphate and inorganic phosphate. This is 3-phosphoshikimate 1-carboxyvinyltransferase from Streptococcus suis (strain 98HAH33).